The chain runs to 290 residues: Putative transport permease ycf38 (290 aa).

Helical transmembrane passes span 21 to 41 (VTSF…FIQL), 46 to 66 (ITLI…GALF), 86 to 106 (PGIL…PLIF), 133 to 153 (FFIS…GVFL), 167 to 187 (FFFL…LALL), 194 to 213 (LIAV…TALA), and 261 to 281 (INIG…FLLF). In terms of domain architecture, ABC transmembrane type-2 spans 46 to 284 (ITLISGILQP…LVGFLLFKKI (239 aa)).

It belongs to the ABC-2 integral membrane protein family.

It is found in the plastid. The protein resides in the cyanelle membrane. This chain is Putative transport permease ycf38 (ycf38), found in Cyanophora paradoxa.